The following is a 344-amino-acid chain: MTTLFLLIALFITTILNPTSGESVGVCYGMMGNNLPSQSDTIALFRQNNIRRVRLYDPNQAALNALRNTGIEVIIGVPNTDLRSLTNPSSARSWLQNNVLNYYPAVSFKYIAVGNEVSPSNGGDVVLPAMRNVYDALRGANLQDRIKVSTAIDMTLIGNSFPPSSGEFRGDVRWYIDPVIGFLTSTNSALLANIYPYFSYVDNPRDISLSYALFTSPSVVVWDGSRGYQNLFDALLDVVYSAVERSGGGSLPVVVSESGWPSNGGNAASFDNARAFYTNLASRVRENRGTPKRPGRGVETYLFAMFDENQKSPEIEKNFGLFFPNKQPKFPITFSAARDGTAVE.

The signal sequence occupies residues 1 to 21 (MTTLFLLIALFITTILNPTSG). E116 serves as the catalytic Proton donor. E257 acts as the Nucleophile in catalysis.

It belongs to the glycosyl hydrolase 17 family. In terms of assembly, (Microbial infection) Interacts with the 30C02 effector protein (AC G3GD54) of the beet cyst nematode Heterodera schachtii. Interaction with the 30C02 effector protein may potentially suppress beta-1,3-glucanase activity and plant defense.

The protein localises to the secreted. The enzyme catalyses Hydrolysis of (1-&gt;3)-beta-D-glucosidic linkages in (1-&gt;3)-beta-D-glucans.. Its function is as follows. May be involved in plant defense against cyst nematode pathogens. This chain is Probable glucan endo-1,3-beta-glucosidase At4g16260, found in Arabidopsis thaliana (Mouse-ear cress).